The sequence spans 89 residues: Putative membrane protein insertion efficiency factor (89 aa).

Residues 69-89 (DPVPPAHTERGGTMCPSRLPE) are disordered.

The protein belongs to the UPF0161 family.

The protein resides in the cell inner membrane. Functionally, could be involved in insertion of integral membrane proteins into the membrane. This chain is Putative membrane protein insertion efficiency factor, found in Paramagnetospirillum magneticum (strain ATCC 700264 / AMB-1) (Magnetospirillum magneticum).